A 90-amino-acid polypeptide reads, in one-letter code: Small ribosomal subunit protein bS18 (90 aa).

Belongs to the bacterial ribosomal protein bS18 family. In terms of assembly, part of the 30S ribosomal subunit. Forms a tight heterodimer with protein bS6.

Binds as a heterodimer with protein bS6 to the central domain of the 16S rRNA, where it helps stabilize the platform of the 30S subunit. This Bordetella petrii (strain ATCC BAA-461 / DSM 12804 / CCUG 43448) protein is Small ribosomal subunit protein bS18.